A 264-amino-acid polypeptide reads, in one-letter code: Myozenin-2 (264 aa).

Arg53 is subject to Omega-N-methylarginine. The interval 90 to 135 (GRVDGSNLEGGSQQGPSTPPNTPDPRSPPNPENIAPGYSGPLKEIP) is disordered. A Phosphoserine modification is found at Ser101. Positions 106–120 (STPPNTPDPRSPPNP) are enriched in pro residues. Residues Thr107 and Thr111 each carry the phosphothreonine modification. Ser116 is subject to Phosphoserine.

It belongs to the myozenin family. In terms of assembly, interacts via its C-terminus with spectrin repeats 3 and 4 of ACTN2. Interacts with ACTN1, LDB3, MYOT and PPP3CA. In terms of tissue distribution, expressed specifically in heart and skeletal muscle. In skeletal muscle, localized to the soleus and plantaris muscles, which are predominantly composed of slow-twitch fibers.

It localises to the cytoplasm. The protein resides in the myofibril. The protein localises to the sarcomere. It is found in the z line. Myozenins may serve as intracellular binding proteins involved in linking Z line proteins such as alpha-actinin, gamma-filamin, TCAP/telethonin, LDB3/ZASP and localizing calcineurin signaling to the sarcomere. Plays an important role in the modulation of calcineurin signaling. May play a role in myofibrillogenesis. The protein is Myozenin-2 of Mus musculus (Mouse).